Consider the following 157-residue polypeptide: 2-C-methyl-D-erythritol 2,4-cyclodiphosphate synthase (157 aa).

A divalent metal cation-binding residues include aspartate 8 and histidine 10. 4-CDP-2-C-methyl-D-erythritol 2-phosphate is bound by residues 8-10 (DVH) and 34-35 (HS). Histidine 42 is an a divalent metal cation binding site. 4-CDP-2-C-methyl-D-erythritol 2-phosphate contacts are provided by residues 56-58 (DIG), 61-65 (FPDTD), 100-106 (AQAPKML), 132-135 (TTTE), phenylalanine 139, and arginine 142.

The protein belongs to the IspF family. Homotrimer. The cofactor is a divalent metal cation.

The enzyme catalyses 4-CDP-2-C-methyl-D-erythritol 2-phosphate = 2-C-methyl-D-erythritol 2,4-cyclic diphosphate + CMP. The protein operates within isoprenoid biosynthesis; isopentenyl diphosphate biosynthesis via DXP pathway; isopentenyl diphosphate from 1-deoxy-D-xylulose 5-phosphate: step 4/6. Its function is as follows. Involved in the biosynthesis of isopentenyl diphosphate (IPP) and dimethylallyl diphosphate (DMAPP), two major building blocks of isoprenoid compounds. Catalyzes the conversion of 4-diphosphocytidyl-2-C-methyl-D-erythritol 2-phosphate (CDP-ME2P) to 2-C-methyl-D-erythritol 2,4-cyclodiphosphate (ME-CPP) with a corresponding release of cytidine 5-monophosphate (CMP). The protein is 2-C-methyl-D-erythritol 2,4-cyclodiphosphate synthase of Erwinia tasmaniensis (strain DSM 17950 / CFBP 7177 / CIP 109463 / NCPPB 4357 / Et1/99).